Consider the following 497-residue polypeptide: Acetyl-coenzyme A carboxylase carboxyl transferase subunit beta, chloroplastic (497 aa).

The CoA carboxyltransferase N-terminal domain occupies 230 to 497 (LWVQCENCYG…FFPLNQNSIK (268 aa)). 4 residues coordinate Zn(2+): cysteine 234, cysteine 237, cysteine 253, and cysteine 256. Residues 234–256 (CENCYGLNYKKFLKSKMNICEQC) form a C4-type zinc finger.

The protein belongs to the AccD/PCCB family. In terms of assembly, acetyl-CoA carboxylase is a heterohexamer composed of biotin carboxyl carrier protein, biotin carboxylase and 2 subunits each of ACCase subunit alpha and ACCase plastid-coded subunit beta (accD). Zn(2+) serves as cofactor.

The protein localises to the plastid. Its subcellular location is the chloroplast stroma. The catalysed reaction is N(6)-carboxybiotinyl-L-lysyl-[protein] + acetyl-CoA = N(6)-biotinyl-L-lysyl-[protein] + malonyl-CoA. The protein operates within lipid metabolism; malonyl-CoA biosynthesis; malonyl-CoA from acetyl-CoA: step 1/1. In terms of biological role, component of the acetyl coenzyme A carboxylase (ACC) complex. Biotin carboxylase (BC) catalyzes the carboxylation of biotin on its carrier protein (BCCP) and then the CO(2) group is transferred by the transcarboxylase to acetyl-CoA to form malonyl-CoA. The protein is Acetyl-coenzyme A carboxylase carboxyl transferase subunit beta, chloroplastic of Carica papaya (Papaya).